Reading from the N-terminus, the 208-residue chain is 3-isopropylmalate dehydratase small subunit (208 aa).

The protein belongs to the LeuD family. LeuD type 1 subfamily. As to quaternary structure, heterodimer of LeuC and LeuD.

It carries out the reaction (2R,3S)-3-isopropylmalate = (2S)-2-isopropylmalate. It functions in the pathway amino-acid biosynthesis; L-leucine biosynthesis; L-leucine from 3-methyl-2-oxobutanoate: step 2/4. In terms of biological role, catalyzes the isomerization between 2-isopropylmalate and 3-isopropylmalate, via the formation of 2-isopropylmaleate. The polypeptide is 3-isopropylmalate dehydratase small subunit (Gluconobacter oxydans (strain 621H) (Gluconobacter suboxydans)).